The chain runs to 229 residues: Putative N-acetylmannosamine-6-phosphate 2-epimerase (229 aa).

The protein belongs to the NanE family.

It carries out the reaction an N-acyl-D-glucosamine 6-phosphate = an N-acyl-D-mannosamine 6-phosphate. Its pathway is amino-sugar metabolism; N-acetylneuraminate degradation; D-fructose 6-phosphate from N-acetylneuraminate: step 3/5. Functionally, converts N-acetylmannosamine-6-phosphate (ManNAc-6-P) to N-acetylglucosamine-6-phosphate (GlcNAc-6-P). The polypeptide is Putative N-acetylmannosamine-6-phosphate 2-epimerase (Escherichia coli O139:H28 (strain E24377A / ETEC)).